The following is a 98-amino-acid chain: uncharacterized protein (98 aa).

This sequence belongs to the CFAP97 family. In terms of tissue distribution, expressed in a number of tissues including brain, thymus, lung, heart, liver, spleen, kidney and testis.

This is an uncharacterized protein from Mus musculus (Mouse).